A 637-amino-acid polypeptide reads, in one-letter code: Zinc-transporting ATPase (637 aa).

The next 4 helical transmembrane spans lie at 43 to 63 (GWLLSGYQVLSIILFLLAFVI), 89 to 109 (IFAAIGSALIGYWAEGAILIF), 258 to 278 (GVLIAVALLLFVPHFALGWSW), and 286 to 306 (MVFMVVASPCALVASIMPAAL). D337 (4-aspartylphosphate intermediate) is an active-site residue. Mg(2+) contacts are provided by D535 and D539. Residues 599–619 (VICLLICANFLQAMELPFGVI) form a helical membrane-spanning segment.

This sequence belongs to the cation transport ATPase (P-type) (TC 3.A.3) family. Type IB subfamily.

It is found in the cell membrane. The enzyme catalyses Zn(2+)(out) + ATP(in) + H2O(in) = Zn(2+)(in) + ADP(in) + phosphate(in) + H(+)(in). Functionally, couples the hydrolysis of ATP with the transport of zinc into the cell. Plays an important role in protecting cells against oxidative stress. ZosA-mediated zinc transport is required for post-transcriptional control of comK and competence development. The sequence is that of Zinc-transporting ATPase (zosA) from Bacillus subtilis (strain 168).